Reading from the N-terminus, the 61-residue chain is Small ribosomal subunit protein uS14B (61 aa).

Cysteine 24, cysteine 27, cysteine 40, and cysteine 43 together coordinate Zn(2+).

Belongs to the universal ribosomal protein uS14 family. Zinc-binding uS14 subfamily. In terms of assembly, part of the 30S ribosomal subunit. Contacts proteins S3 and S10. It depends on Zn(2+) as a cofactor.

Functionally, binds 16S rRNA, required for the assembly of 30S particles and may also be responsible for determining the conformation of the 16S rRNA at the A site. The sequence is that of Small ribosomal subunit protein uS14B from Staphylococcus epidermidis (strain ATCC 35984 / DSM 28319 / BCRC 17069 / CCUG 31568 / BM 3577 / RP62A).